The chain runs to 223 residues: Deoxyribose-phosphate aldolase (223 aa).

Residue D89 is the Proton donor/acceptor of the active site. The active-site Schiff-base intermediate with acetaldehyde is the K152. K181 acts as the Proton donor/acceptor in catalysis.

The protein belongs to the DeoC/FbaB aldolase family. DeoC type 1 subfamily.

Its subcellular location is the cytoplasm. The catalysed reaction is 2-deoxy-D-ribose 5-phosphate = D-glyceraldehyde 3-phosphate + acetaldehyde. It functions in the pathway carbohydrate degradation; 2-deoxy-D-ribose 1-phosphate degradation; D-glyceraldehyde 3-phosphate and acetaldehyde from 2-deoxy-alpha-D-ribose 1-phosphate: step 2/2. Catalyzes a reversible aldol reaction between acetaldehyde and D-glyceraldehyde 3-phosphate to generate 2-deoxy-D-ribose 5-phosphate. In Listeria innocua serovar 6a (strain ATCC BAA-680 / CLIP 11262), this protein is Deoxyribose-phosphate aldolase.